We begin with the raw amino-acid sequence, 93 residues long: Putative regulatory protein Amet_2791 (93 aa).

Belongs to the RemA family.

This is Putative regulatory protein Amet_2791 from Alkaliphilus metalliredigens (strain QYMF).